Reading from the N-terminus, the 799-residue chain is Probable inorganic carbon transporter subunit DabA (799 aa).

Residues cysteine 303, aspartate 305, histidine 479, and cysteine 494 each coordinate Zn(2+). The tract at residues 574–598 (AGAAAERSEALNGADPDKGVSETAS) is disordered.

The protein belongs to the inorganic carbon transporter (TC 9.A.2) DabA family. As to quaternary structure, forms a complex with DabB. Zn(2+) is required as a cofactor.

Its subcellular location is the cell membrane. Functionally, part of an energy-coupled inorganic carbon pump. The polypeptide is Probable inorganic carbon transporter subunit DabA (Natronomonas pharaonis (strain ATCC 35678 / DSM 2160 / CIP 103997 / JCM 8858 / NBRC 14720 / NCIMB 2260 / Gabara) (Halobacterium pharaonis)).